Consider the following 228-residue polypeptide: HTH-type transcriptional repressor RspR (228 aa).

An HTH gntR-type domain is found at 11 to 78 (QPVNQQIYRI…PQRGSYVNKI (68 aa)). Residues 38–57 (EKEVSVRFNVSRQPVREAFI) constitute a DNA-binding region (H-T-H motif).

In terms of biological role, repressor of the rspAB operon. Acts by binding directly to the upstream region of rspA. This chain is HTH-type transcriptional repressor RspR (rspR), found in Escherichia coli (strain K12).